A 104-amino-acid polypeptide reads, in one-letter code: DNA-directed RNA polymerase subunit omega (104 aa).

It belongs to the RNA polymerase subunit omega family. As to quaternary structure, the RNAP catalytic core consists of 2 alpha, 1 beta, 1 beta' and 1 omega subunit. When a sigma factor is associated with the core the holoenzyme is formed, which can initiate transcription.

The catalysed reaction is RNA(n) + a ribonucleoside 5'-triphosphate = RNA(n+1) + diphosphate. Functionally, promotes RNA polymerase assembly. Latches the N- and C-terminal regions of the beta' subunit thereby facilitating its interaction with the beta and alpha subunits. The chain is DNA-directed RNA polymerase subunit omega from Streptococcus agalactiae serotype Ia (strain ATCC 27591 / A909 / CDC SS700).